Reading from the N-terminus, the 345-residue chain is Short-wave-sensitive opsin 1 (345 aa).

At 1 to 30 (MSEEEFYLFKNISSVGPWDGPQYHIAPVWA) the chain is on the extracellular side. Asn-11 is a glycosylation site (N-linked (GlcNAc...) asparagine). A helical transmembrane segment spans residues 31 to 55 (FYLQAAFMGTVFLIGFPLNAMVLVA). Topologically, residues 56 to 67 (TLRYKKLRQPLN) are cytoplasmic. Residues 68–93 (YILVNVSFGGFLLCIFSVFPVFVASC) traverse the membrane as a helical segment. Over 94 to 107 (NGYFVFGRHVCALE) the chain is Extracellular. Cys-104 and Cys-181 are disulfide-bonded. The chain crosses the membrane as a helical span at residues 108–127 (GFLGTVAGLVTGWSLAFLAF). The Cytoplasmic segment spans residues 128 to 146 (ERYIVICKPFGNFRFSSKH). A helical transmembrane segment spans residues 147 to 170 (ALTVVLATWTIGIGVSIPPFFGWS). Residues 171–196 (RFIPEGLQCSCGPDWYTVGTKYRSES) lie on the Extracellular side of the membrane. The helical transmembrane segment at 197 to 224 (YTWFLFIFCFIVPLSLICFSYTQLLRAL) threads the bilayer. Over 225–246 (KAVAAQQQESATTQKAEREVSR) the chain is Cytoplasmic. Residues 247-270 (MVVVMVGSFCVCYVPYAAFAMYMV) traverse the membrane as a helical segment. The Extracellular segment spans residues 271–278 (NNRNHGLD). A helical transmembrane segment spans residues 279 to 303 (LRLVTIPSFFSKSACIYNPIIYCFM). An N6-(retinylidene)lysine modification is found at Lys-290. At 304 to 345 (NKQFQACIMKMVCGKAMTDESDTCSSQKTEVSTVSSTQVGPN) the chain is on the cytoplasmic side.

This sequence belongs to the G-protein coupled receptor 1 family. Opsin subfamily. Post-translationally, phosphorylated on some or all of the serine and threonine residues present in the C-terminal region. The three color pigments are found in the cone photoreceptor cells. Expressed throughout the epidermis and dermis, primarily in the stratum granulosum in the facial and abdominal skin (at protein level). Expressed in dermal fibroblasts (at protein level). Expressed in melanocytes (at protein level).

The protein resides in the cell membrane. It is found in the photoreceptor inner segment. It localises to the cell projection. Its subcellular location is the cilium. The protein localises to the photoreceptor outer segment. The protein resides in the cytoplasm. It is found in the perinuclear region. Functionally, visual pigments are the light-absorbing molecules that mediate vision. They consist of an apoprotein, opsin, covalently linked to cis-retinal. Required for the maintenance of cone outer segment organization in the ventral retina, but not essential for the maintenance of functioning cone photoreceptors. Involved in ensuring correct abundance and localization of retinal membrane proteins. May increase spectral sensitivity in dim light. The chain is Short-wave-sensitive opsin 1 (OPN1SW) from Homo sapiens (Human).